A 565-amino-acid chain; its full sequence is Adenine deaminase (565 aa).

The protein belongs to the metallo-dependent hydrolases superfamily. Adenine deaminase family. Mn(2+) is required as a cofactor.

The enzyme catalyses adenine + H2O + H(+) = hypoxanthine + NH4(+). The protein is Adenine deaminase of Sinorhizobium fredii (strain NBRC 101917 / NGR234).